Here is a 182-residue protein sequence, read N- to C-terminus: UPF0301 protein NGK_1355 (182 aa).

It belongs to the UPF0301 (AlgH) family.

This chain is UPF0301 protein NGK_1355, found in Neisseria gonorrhoeae (strain NCCP11945).